The following is a 354-amino-acid chain: Lysophosphatidic acid receptor 3 (354 aa).

Over 1 to 31 (MNECHYDKRMDFFYNRSNTDTADEWTGTKLV) the chain is Extracellular. Residue Asn-15 is glycosylated (N-linked (GlcNAc...) asparagine). Residues 32-52 (IVLCVGTFFCLFIFFSNSLVI) traverse the membrane as a helical segment. Topologically, residues 53–67 (AAVITNRKFHFPFYY) are cytoplasmic. Residues 68–88 (LLANLAAADFFAGIAYVFLMF) traverse the membrane as a helical segment. At 89–101 (NTGPVSKTLTVNR) the chain is on the extracellular side. Residues 102-124 (WFLRQGLLDTSLTASLANLLVIA) traverse the membrane as a helical segment. Topologically, residues 125–146 (VERHMSIMRMRVHSNLTKKRVT) are cytoplasmic. Residues 147 to 167 (LLILLVWAIAIFMGAVPTLGW) traverse the membrane as a helical segment. At 168 to 186 (NCLCNISACSSLAPIYSRS) the chain is on the extracellular side. Asn-172 carries an N-linked (GlcNAc...) asparagine glycan. Residues 187-207 (YLIFWTVSNLLAFFIMVAVYV) form a helical membrane-spanning segment. At 208–240 (RIYMYVKRKTNVLSPHTSGSISRRRAPMKLMKT) the chain is on the cytoplasmic side. A helical membrane pass occupies residues 241 to 261 (VMTVLGAFVVCWTPGLVVLLL). The Extracellular portion of the chain corresponds to 262-276 (DGLNCKQCNVQHVKR). The helical transmembrane segment at 277 to 295 (WFLLLALLNSVMNPIIYSY) threads the bilayer. Over 296-354 (KDEDMYNTMRKMICCALQDSNTERRPSRNPSTIHSRSETGSQYLEDSISQGPVCNKNGS) the chain is Cytoplasmic. Cys-309 carries the S-palmitoyl cysteine lipid modification. The disordered stretch occupies residues 315 to 354 (SNTERRPSRNPSTIHSRSETGSQYLEDSISQGPVCNKNGS). Residues 323–354 (RNPSTIHSRSETGSQYLEDSISQGPVCNKNGS) are compositionally biased toward polar residues.

Belongs to the G-protein coupled receptor 1 family. In terms of tissue distribution, most abundantly expressed in testes, kidney, and lung, with moderate levels in small intestine, and low levels in heart, stomach, spleen, and adult and perinatal brain. Little or no expression in embryonic brain, liver, or thymus.

It localises to the cell membrane. Functionally, receptor for lysophosphatidic acid (LPA), a mediator of diverse cellular activities. Seems to be coupled to the G(i)/G(o) and G(q) families of heteromeric G proteins. This chain is Lysophosphatidic acid receptor 3 (Lpar3), found in Mus musculus (Mouse).